The sequence spans 1197 residues: Protein timeless homolog (1197 aa).

Positions 1–309 are required for homodimerization and for interaction with CRY1 and CHEK1; the sequence is MDLYMMNCEL…GLHNLQNYSS (309 aa). At Ser-281 the chain carries Phosphoserine. Disordered regions lie at residues 647–674 and 943–1002; these read STPL…EELQ and RKKL…SAEN. The segment covering 656 to 673 has biased composition (acidic residues); the sequence is PEEGDAEEEEEEEEEEEL. A DNA-binding domain region spans residues 810–949; sequence SHRAPLWSPE…KKRRKKLAPS (140 aa). Residues 963–985 are compositionally biased toward acidic residues; it reads QEDPEEEDEHLPEDESEDEESEE. Residues 986–999 show a composition bias toward low complexity; sequence GLPSGQGQGSSSLS. Residues 997–1095 are interaction with PARP1; it reads SLSAENLGES…TQLRRVAASL (99 aa). Ser-1071 and Ser-1084 each carry phosphoserine. The tract at residues 1079-1197 is required for nuclear localization; sequence IPAKLSSTQL…KRFQIEDEDD (119 aa). Thr-1086 is modified (phosphothreonine). A disordered region spans residues 1088–1197; sequence LRRVAASLSQ…KRFQIEDEDD (110 aa). 2 stretches are compositionally biased toward acidic residues: residues 1099-1109 and 1143-1153; these read ENEEEREEEPE and TEEEATGEEEW. Ser-1165 carries the phosphoserine modification.

Belongs to the timeless family. As to quaternary structure, monomer. Homodimer or homomultimer. Component of the circadian core oscillator, which includes the CRY proteins, CLOCK or NPAS2, ARTNL/BMAL1 or ARTNL2/BMAL2, CSKN1D and/or CSNK1E, TIMELESS, and the PER proteins. Interacts directly with PER2; the interaction with PER2 is via its second PAS domain. Interacts directly with PER1 and PER3. Interacts with CRY1. Interacts with CRY2. Interacts with CHEK1, ATR and ATRIP. Interacts with CLSPN. Interacts (via N-terminus) with TIPIN. The TIMELESS-TIPIN heterodimer binds preferably to guanine-rich quadruplex-forming (G4) DNA structures. Associates with the MCM2-7 complex. Interacts with DNA polymerases alpha, delta and epsilon. Interacts with DDX11; this interaction increases recruitment of both proteins onto chromatin in response to replication stress induction by hydroxyurea. Interacts with PARP1; interaction is direct and independent of poly-ADP-ribose. Predominantly and robustly expressed in proliferative organs (spleen, thymus, intestine and testis) compared to those more differentiated such as kidney and liver (at protein level). Expressed in all tissues examined including brain, heart, lung, liver, skeletal muscle, kidney, placenta, pancreas, spleen, thymus and testis. Strongly expressed in the suprachiasmatic nucleus (SCN) and pars tuberalis, moderately in the cingulate cortex, pyrimidal cell layer of the piriform cortex, periventricular part of the caudate putamen, and granular layer of the cerebellum, and weakly in the cerebral cortex, gyrus dentatus, hippocampus and thalamic nuclei. In embryonic kidney, expression is highest in regions of active ureteric bud cell branching.

Its subcellular location is the nucleus. The protein localises to the chromosome. Plays an important role in the control of DNA replication, maintenance of replication fork stability, maintenance of genome stability throughout normal DNA replication, DNA repair and in the regulation of the circadian clock. Required to stabilize replication forks during DNA replication by forming a complex with TIPIN: this complex regulates DNA replication processes under both normal and stress conditions, stabilizes replication forks and influences both CHEK1 phosphorylation and the intra-S phase checkpoint in response to genotoxic stress. During DNA replication, inhibits the CMG complex ATPase activity and activates DNA polymerases catalytic activities, coupling DNA unwinding and DNA synthesis. TIMELESS promotes TIPIN nuclear localization. Plays a role in maintaining processive DNA replication past genomic guanine-rich DNA sequences that form G-quadruplex (G4) structures, possibly together with DDX1. Involved in cell survival after DNA damage or replication stress by promoting DNA repair. In response to double-strand breaks (DSBs), accumulates at DNA damage sites and promotes homologous recombination repair via its interaction with PARP1. May be specifically required for the ATR-CHEK1 pathway in the replication checkpoint induced by hydroxyurea or ultraviolet light. Involved in the determination of period length and in the DNA damage-dependent phase advancing of the circadian clock. Negatively regulates CLOCK|NPAS2-ARTNL/BMAL1|ARTNL2/BMAL2-induced transactivation of PER1 possibly via translocation of PER1 into the nucleus. May also play an important role in epithelial cell morphogenesis and formation of branching tubules. This chain is Protein timeless homolog, found in Mus musculus (Mouse).